Consider the following 238-residue polypeptide: ATP-dependent dethiobiotin synthetase BioD (238 aa).

12 to 17 (GVGKTV) is a binding site for ATP. Thr-16 contributes to the Mg(2+) binding site. Lys-37 is a catalytic residue. Residue Thr-41 coordinates substrate. ATP contacts are provided by residues Asp-50, 109–112 (EGAG), 170–171 (GS), and 200–202 (PAG). Residues Asp-50 and Glu-109 each coordinate Mg(2+).

It belongs to the dethiobiotin synthetase family. Homodimer. Mg(2+) is required as a cofactor.

The protein localises to the cytoplasm. It carries out the reaction (7R,8S)-7,8-diammoniononanoate + CO2 + ATP = (4R,5S)-dethiobiotin + ADP + phosphate + 3 H(+). Its pathway is cofactor biosynthesis; biotin biosynthesis; biotin from 7,8-diaminononanoate: step 1/2. Its function is as follows. Catalyzes a mechanistically unusual reaction, the ATP-dependent insertion of CO2 between the N7 and N8 nitrogen atoms of 7,8-diaminopelargonic acid (DAPA, also called 7,8-diammoniononanoate) to form a ureido ring. This chain is ATP-dependent dethiobiotin synthetase BioD, found in Frankia casuarinae (strain DSM 45818 / CECT 9043 / HFP020203 / CcI3).